A 47-amino-acid polypeptide reads, in one-letter code: ATP-dependent zinc metalloprotease FTSH, chloroplastic (47 aa).

This sequence in the N-terminal section; belongs to the AAA ATPase family. The protein in the C-terminal section; belongs to the peptidase M41 family. It depends on Zn(2+) as a cofactor.

The protein resides in the plastid. Its subcellular location is the chloroplast membrane. Seems to act as an ATP-dependent zinc metallopeptidase. In Populus euphratica (Euphrates poplar), this protein is ATP-dependent zinc metalloprotease FTSH, chloroplastic.